A 303-amino-acid polypeptide reads, in one-letter code: Probable serine acetyltransferase 1 (303 aa).

Disordered regions lie at residues 1-36 and 271-290; these read MTAG…ESDA and NPAR…ESMD.

This sequence belongs to the transferase hexapeptide repeat family. As to quaternary structure, homomultimer.

It catalyses the reaction L-serine + acetyl-CoA = O-acetyl-L-serine + CoA. It functions in the pathway amino-acid biosynthesis; L-cysteine biosynthesis; L-cysteine from L-serine: step 1/2. The polypeptide is Probable serine acetyltransferase 1 (SAT1) (Oryza sativa subsp. japonica (Rice)).